The sequence spans 175 residues: Co-chaperone protein HscB homolog (175 aa).

Positions 7-79 (SHFDLFDLPA…LKRATYLLHL (73 aa)) constitute a J domain.

The protein belongs to the HscB family. As to quaternary structure, interacts with HscA and stimulates its ATPase activity.

Functionally, co-chaperone involved in the maturation of iron-sulfur cluster-containing proteins. Seems to help targeting proteins to be folded toward HscA. The polypeptide is Co-chaperone protein HscB homolog (Paraburkholderia xenovorans (strain LB400)).